The following is a 377-amino-acid chain: Queuine tRNA-ribosyltransferase (377 aa).

The active-site Proton acceptor is the Asp-93. Residues 93–97 (DSGGF), Asp-147, Gln-190, and Gly-216 each bind substrate. Positions 247-253 (GVGTPDD) are RNA binding. Residue Asp-266 is the Nucleophile of the active site. The tract at residues 271-275 (TRAGR) is RNA binding; important for wobble base 34 recognition. Positions 304, 306, 309, and 335 each coordinate Zn(2+).

Belongs to the queuine tRNA-ribosyltransferase family. Homodimer. Within each dimer, one monomer is responsible for RNA recognition and catalysis, while the other monomer binds to the replacement base PreQ1. The cofactor is Zn(2+).

It carries out the reaction 7-aminomethyl-7-carbaguanine + guanosine(34) in tRNA = 7-aminomethyl-7-carbaguanosine(34) in tRNA + guanine. The protein operates within tRNA modification; tRNA-queuosine biosynthesis. In terms of biological role, catalyzes the base-exchange of a guanine (G) residue with the queuine precursor 7-aminomethyl-7-deazaguanine (PreQ1) at position 34 (anticodon wobble position) in tRNAs with GU(N) anticodons (tRNA-Asp, -Asn, -His and -Tyr). Catalysis occurs through a double-displacement mechanism. The nucleophile active site attacks the C1' of nucleotide 34 to detach the guanine base from the RNA, forming a covalent enzyme-RNA intermediate. The proton acceptor active site deprotonates the incoming PreQ1, allowing a nucleophilic attack on the C1' of the ribose to form the product. After dissociation, two additional enzymatic reactions on the tRNA convert PreQ1 to queuine (Q), resulting in the hypermodified nucleoside queuosine (7-(((4,5-cis-dihydroxy-2-cyclopenten-1-yl)amino)methyl)-7-deazaguanosine). The polypeptide is Queuine tRNA-ribosyltransferase (Granulibacter bethesdensis (strain ATCC BAA-1260 / CGDNIH1)).